The primary structure comprises 237 residues: Uridylate kinase (237 aa).

An ATP-binding site is contributed by 12 to 15 (KLSG). The interval 20 to 25 (GEDGLG) is involved in allosteric activation by GTP. A UMP-binding site is contributed by G54. G55 and R59 together coordinate ATP. UMP is bound by residues D74 and 135-142 (TGNPFFTT). Residues T162, Y168, and D171 each coordinate ATP.

It belongs to the UMP kinase family. As to quaternary structure, homohexamer.

It localises to the cytoplasm. It carries out the reaction UMP + ATP = UDP + ADP. The protein operates within pyrimidine metabolism; CTP biosynthesis via de novo pathway; UDP from UMP (UMPK route): step 1/1. Allosterically activated by GTP. Inhibited by UTP. Functionally, catalyzes the reversible phosphorylation of UMP to UDP. In Haemophilus influenzae (strain 86-028NP), this protein is Uridylate kinase.